The primary structure comprises 406 residues: Tyrosine--tRNA ligase (406 aa).

L-tyrosine is bound at residue Tyr-34. Residues 39-48 (PTADSLHVGH) carry the 'HIGH' region motif. Tyr-167 and Gln-171 together coordinate L-tyrosine. Residues 227 to 231 (KMGKT) carry the 'KMSKS' region motif. ATP is bound at residue Lys-230. One can recognise an S4 RNA-binding domain in the interval 339 to 404 (RKIVDVLFEA…GKKEYHRLLV (66 aa)).

It belongs to the class-I aminoacyl-tRNA synthetase family. TyrS type 1 subfamily. As to quaternary structure, homodimer.

The protein localises to the cytoplasm. The catalysed reaction is tRNA(Tyr) + L-tyrosine + ATP = L-tyrosyl-tRNA(Tyr) + AMP + diphosphate + H(+). Its function is as follows. Catalyzes the attachment of tyrosine to tRNA(Tyr) in a two-step reaction: tyrosine is first activated by ATP to form Tyr-AMP and then transferred to the acceptor end of tRNA(Tyr). In Caldanaerobacter subterraneus subsp. tengcongensis (strain DSM 15242 / JCM 11007 / NBRC 100824 / MB4) (Thermoanaerobacter tengcongensis), this protein is Tyrosine--tRNA ligase.